Here is a 543-residue protein sequence, read N- to C-terminus: Gap junction alpha-10 protein (543 aa).

Residues 1–16 (MGDWNLLGGILEEVHS) are Cytoplasmic-facing. The chain crosses the membrane as a helical span at residues 17 to 37 (HSTIVGKIWLTILFIFRMLVL). Residues 38 to 76 (RVAAEDVWDDEQSAFACNTRQPGCNNICYDDAFPISLIR) are Extracellular-facing. The chain crosses the membrane as a helical span at residues 77–97 (FWVLQIIFVSSPSLVYMGHAL). Over 98–165 (YRLRAFEKDR…TYVLHILTRS (68 aa)) the chain is Cytoplasmic. A helical membrane pass occupies residues 166–186 (VLEVGFMIGQYILYGFQMHPL). Residues 187-209 (YKCTQPPCPNAVDCFVSRPTEKT) lie on the Extracellular side of the membrane. A helical transmembrane segment spans residues 210-230 (IFMLFMHSIAAISLLLNILEI). The Cytoplasmic portion of the chain corresponds to 231-543 (FHLGIRKIMR…HSIHSVKFNS (313 aa)). Disordered regions lie at residues 306-359 (PQPR…SSFG) and 379-424 (PSFA…DRSR). The segment covering 317-328 (NGKKDWSEKDQH) has biased composition (basic and acidic residues). The segment covering 344–359 (AGNQHLGQQSDHSSFG) has biased composition (polar residues). Over residues 400–413 (TDLHSHCRDSEGSM) the composition is skewed to basic and acidic residues.

It belongs to the connexin family. Alpha-type (group II) subfamily. In terms of assembly, a connexon is composed of a hexamer of connexins. Expressed in skeletal muscle and heart.

The protein localises to the cell membrane. It is found in the cell junction. Its subcellular location is the gap junction. Its function is as follows. One gap junction consists of a cluster of closely packed pairs of transmembrane channels, the connexons, through which materials of low MW diffuse from one cell to a neighboring cell. Involved in tracer coupling between horizontal cells of the retina. May play a role in the regulation of horizontal cell patterning. This is Gap junction alpha-10 protein (GJA10) from Homo sapiens (Human).